A 364-amino-acid chain; its full sequence is Glycerol dehydrogenase (364 aa).

NAD(+) contacts are provided by Asp-37, Gly-92, Lys-93, Thr-114, and Ser-117. A glycerol-binding site is contributed by Asp-119. The NAD(+) site is built by Ser-123, Leu-125, and Tyr-129. Glycerol contacts are provided by Asp-169, His-252, and His-269. Zn(2+) contacts are provided by Asp-169, His-252, and His-269.

This sequence belongs to the iron-containing alcohol dehydrogenase family. Zn(2+) is required as a cofactor.

It catalyses the reaction glycerol + NAD(+) = dihydroxyacetone + NADH + H(+). It functions in the pathway polyol metabolism; glycerol fermentation; glycerone phosphate from glycerol (oxidative route): step 1/2. Its function is as follows. Catalyzes the NAD-dependent oxidation of glycerol to dihydroxyacetone (glycerone). This chain is Glycerol dehydrogenase (gldA), found in Thermotoga maritima (strain ATCC 43589 / DSM 3109 / JCM 10099 / NBRC 100826 / MSB8).